We begin with the raw amino-acid sequence, 59 residues long: Cecropin-C (59 aa).

Positions 1-23 are cleaved as a signal peptide; the sequence is MNFKLIFLVALVLMAAFLGQTEG. Valine amide is present on valine 58.

It belongs to the cecropin family.

It localises to the secreted. Cecropins have lytic and antibacterial activity against several Gram-positive and Gram-negative bacteria. This chain is Cecropin-C (CecC), found in Anopheles gambiae (African malaria mosquito).